The following is a 339-amino-acid chain: Serpentine receptor class delta-19 (339 aa).

7 consecutive transmembrane segments (helical) span residues 2–22, 39–59, 90–110, 130–150, 187–207, 242–262, and 270–290; these read IIFF…LNLL, ATLI…DLFI, VGLS…LISF, ITIM…TLFV, VYAV…IFVL, IIPM…SGLL, and SIFS…LYFV.

It belongs to the nematode receptor-like protein srd family.

The protein localises to the membrane. In Caenorhabditis elegans, this protein is Serpentine receptor class delta-19 (srd-19).